We begin with the raw amino-acid sequence, 138 residues long: Large ribosomal subunit protein bL17 (138 aa).

This sequence belongs to the bacterial ribosomal protein bL17 family. Part of the 50S ribosomal subunit. Contacts protein L32.

The polypeptide is Large ribosomal subunit protein bL17 (Solidesulfovibrio magneticus (strain ATCC 700980 / DSM 13731 / RS-1) (Desulfovibrio magneticus)).